A 258-amino-acid polypeptide reads, in one-letter code: UPF0246 protein VP0504 (258 aa).

The protein belongs to the UPF0246 family.

This is UPF0246 protein VP0504 from Vibrio parahaemolyticus serotype O3:K6 (strain RIMD 2210633).